Consider the following 260-residue polypeptide: DNA repair protein RecO (260 aa).

The protein belongs to the RecO family.

Its function is as follows. Involved in DNA repair and RecF pathway recombination. This Salinibacter ruber (strain DSM 13855 / M31) protein is DNA repair protein RecO.